The primary structure comprises 209 residues: MRKKPIIIGVTGGSGGGKTSVSRAILSNFPDQKITMIEHDSYYKDQSHLTFEERVKTNYDHPLAFDTNLMIEQLNELIEGRPVDIPVYDYTKHTRSDRTIRQDPQDVIIVEGILVLEDQRLRDLMDIKLFVDTDDDIRIIRRIKRDMEERDRSLDSIIEQYTEVVKPMYHQFIEPTKRYADIVIPEGVSNIVAIDLINTKVASILNEAK.

12–19 (GGSGGGKT) contacts ATP.

It belongs to the uridine kinase family.

It localises to the cytoplasm. The enzyme catalyses uridine + ATP = UMP + ADP + H(+). It catalyses the reaction cytidine + ATP = CMP + ADP + H(+). It participates in pyrimidine metabolism; CTP biosynthesis via salvage pathway; CTP from cytidine: step 1/3. It functions in the pathway pyrimidine metabolism; UMP biosynthesis via salvage pathway; UMP from uridine: step 1/1. This is Uridine kinase from Streptococcus agalactiae serotype III (strain NEM316).